The sequence spans 265 residues: MSVPGEREQGAGEDPATVRPTQRTLVIIPTYNERENLPLIVGRVHHACPQVHILVVDDGSPDGTGALADELALADPDRVHVMHRTSKAGLGAAYLAGFDWGLRRGYSVLVEMDADGSHAPEELSRLLDAVDAGADLAIGSRYVPGGTVRNWPWRRLVLSKTANTYSRFLLGVGIHDITAGYRAYRREVLEKIDLSAVDSKGYCFQIDLTWRAINNGFSVVEVPITFTERELGVSKMSGSNIREAMFKVAEWGIRGRLDRARGVVR.

The segment covering 1 to 10 (MSVPGEREQG) has biased composition (basic and acidic residues). The disordered stretch occupies residues 1–21 (MSVPGEREQGAGEDPATVRPT).

The protein belongs to the glycosyltransferase 2 family. As to quaternary structure, interacts with Lnt (also called Ppm2, AC A0QZ13) upon coexpression in E.coli, which increases the PPM synthase activity of this protein.

The protein resides in the cytoplasm. It carries out the reaction a di-trans,poly-cis-dolichyl phosphate + GDP-alpha-D-mannose = a di-trans,poly-cis-dolichyl beta-D-mannosyl phosphate + GDP. In terms of biological role, transfers mannose from GDP-mannose to lipid acceptors to form polyprenol monophosphomannose (PPM); catalytic activity in vitro is enhanced by Lnt (AC A0QZ13). PMM is an alkai-stable sugar donor which adds mannose-phosphate residues to triacylated-PIM2, eventually leading to generation of the cell wall glycolipid lipoglycan modulins lipoarabinomannan (LAM) and lipomannan (LM). This is Polyprenol monophosphomannose synthase from Mycolicibacterium smegmatis (strain ATCC 700084 / mc(2)155) (Mycobacterium smegmatis).